Consider the following 469-residue polypeptide: CBL-interacting serine/threonine-protein kinase 16 (469 aa).

A Protein kinase domain is found at 15–278 (YNIGRLLGTG…MSEIKMIPWF (264 aa)). ATP-binding positions include 21-29 (LGTGNFAKV) and Lys44. Asp139 functions as the Proton acceptor in the catalytic mechanism. Residues 157 to 193 (DFGLSALMMPEGLGGRRGSSDDLLHTRCGTPAYVAPE) form an activation loop region. The residue at position 161 (Ser161) is a Phosphoserine. Residue Thr182 is modified to Phosphothreonine. Residues 290-320 (IDETIPSPPEPPTKKKKKDLNEKEDDGASPR) are disordered. In terms of domain architecture, NAF spans 317-342 (ASPRSFNAFQFITSMSSGFDLSNLFE). Residues 346 to 376 (KPKRMFTSKFPAKSVKERLETAAREMDMRVK) form a PPI region. The tract at residues 447-469 (DDEDDVTTNDNVDTNDNKINNVS) is disordered. The span at 454-469 (TNDNVDTNDNKINNVS) shows a compositional bias: low complexity.

It belongs to the protein kinase superfamily. CAMK Ser/Thr protein kinase family. SNF1 subfamily. Part of a K(+)-channel calcium-sensing kinase/phosphatase complex composed by a calcium sensor CBL (CBL1, CBL2, CBL3 or CBL9), a kinase CIPK (CIPK6, CIPK16 or CIPK23), a phosphatase PP2C (AIP1) and a K(+)-channel (AKT1). Interacts with AKT1, CBL1, CBL2, CBL3 and CBL9. Mn(2+) is required as a cofactor.

The enzyme catalyses L-seryl-[protein] + ATP = O-phospho-L-seryl-[protein] + ADP + H(+). The catalysed reaction is L-threonyl-[protein] + ATP = O-phospho-L-threonyl-[protein] + ADP + H(+). Functionally, CIPK serine-threonine protein kinases interact with CBL proteins. Binding of a CBL protein to the regulatory NAF domain of CIPK protein lead to the activation of the kinase in a calcium-dependent manner. Downstream of CBL1, CBL2, CBL3 and CBL9, regulates by phosphorylation the K(+) conductance and uptake of AKT1. This Arabidopsis thaliana (Mouse-ear cress) protein is CBL-interacting serine/threonine-protein kinase 16 (CIPK16).